A 386-amino-acid chain; its full sequence is Endonuclease III homolog 2, chloroplastic (386 aa).

The N-terminal 50 residues, 1–50, are a transit peptide targeting the chloroplast; that stretch reads MILTGAASTFPIVARVLNAMNRRMYAATTLSSAKSISAESLNLRSDSNSE. Residues 44-66 form a disordered region; it reads RSDSNSEAAHGASESETRVSLRK. Residues 252 to 278 enclose the HhH domain; the sequence is YDGDIPRTLEELLSLPGVGPKIAHLVL. Lysine 272 acts as the Nucleophile; for N-glycosylase activity in catalysis. The [4Fe-4S] cluster site is built by cysteine 347, cysteine 354, cysteine 357, and cysteine 363.

The protein belongs to the Nth/MutY family. Requires [4Fe-4S] cluster as cofactor.

It localises to the plastid. The protein resides in the chloroplast stroma. Its subcellular location is the chloroplast nucleoid. The enzyme catalyses 2'-deoxyribonucleotide-(2'-deoxyribose 5'-phosphate)-2'-deoxyribonucleotide-DNA = a 3'-end 2'-deoxyribonucleotide-(2,3-dehydro-2,3-deoxyribose 5'-phosphate)-DNA + a 5'-end 5'-phospho-2'-deoxyribonucleoside-DNA + H(+). Bifunctional DNA N-glycosylase with associated apurinic/apyrimidinic (AP) lyase function that catalyzes the first step in base excision repair (BER), the primary repair pathway for the repair of oxidative DNA damage. The DNA N-glycosylase activity releases the damaged DNA base from DNA by cleaving the N-glycosidic bond, leaving an AP site. The AP lyase activity cleaves the phosphodiester bond 3' to the AP site by a beta-elimination. Primarily recognizes and repairs oxidative base damage of pyrimidines. This chain is Endonuclease III homolog 2, chloroplastic (NTH2), found in Arabidopsis thaliana (Mouse-ear cress).